Consider the following 209-residue polypeptide: Uracil phosphoribosyltransferase (209 aa).

Residues R79, R104, and 131–139 (DPMLATGGS) each bind 5-phospho-alpha-D-ribose 1-diphosphate. Uracil-binding positions include I194 and 199–201 (GDA). D200 contacts 5-phospho-alpha-D-ribose 1-diphosphate.

Belongs to the UPRTase family. Requires Mg(2+) as cofactor.

The enzyme catalyses UMP + diphosphate = 5-phospho-alpha-D-ribose 1-diphosphate + uracil. It functions in the pathway pyrimidine metabolism; UMP biosynthesis via salvage pathway; UMP from uracil: step 1/1. Its activity is regulated as follows. Allosterically activated by GTP. In terms of biological role, catalyzes the conversion of uracil and 5-phospho-alpha-D-ribose 1-diphosphate (PRPP) to UMP and diphosphate. The sequence is that of Uracil phosphoribosyltransferase from Clostridium botulinum (strain Alaska E43 / Type E3).